A 713-amino-acid chain; its full sequence is Endopolyphosphatase (713 aa).

The Cytoplasmic portion of the chain corresponds to 1–19; the sequence is MSVLIDEKSHRSSGSTRSR. Residues 20 to 40 form a helical; Signal-anchor for type II membrane protein membrane-spanning segment; the sequence is IVVTVVGVLLMVSGLAVMLGH. Residues 41–713 lie on the Vacuolar side of the membrane; that stretch reads QSGSANEALG…SSEYENMGMG (673 aa). The span at 399-418 shows a compositional bias: acidic residues; sequence SDDDDNSDSDSDDDDEDTSL. A disordered region spans residues 399–430; it reads SDDDDNSDSDSDDDDEDTSLEESYSNFNSPIL. 2 N-linked (GlcNAc...) asparagine glycosylation sites follow: Asn-507 and Asn-645. A compositionally biased stretch (basic residues) spans 640-659; that stretch reads VKEKKNKSNKKSKKKKKNKD. A disordered region spans residues 640–684; it reads VKEKKNKSNKKSKKKKKNKDKRLLENSEPLKQDGSKDSRLEQDRV. Positions 660-683 are enriched in basic and acidic residues; sequence KRLLENSEPLKQDGSKDSRLEQDR.

It belongs to the endopolyphosphatase PPN1 family. A divalent metal cation serves as cofactor. In terms of processing, processing by proteases in the vacuole may be required for activation.

Its subcellular location is the vacuole membrane. The enzyme catalyses [phosphate](n+1) + n H2O = (n+1) phosphate + n H(+). Its function is as follows. Catalyzes the hydrolysis of inorganic polyphosphate (polyP) chains of many hundreds of phosphate residues into shorter lengths. The polypeptide is Endopolyphosphatase (PPN1) (Debaryomyces hansenii (strain ATCC 36239 / CBS 767 / BCRC 21394 / JCM 1990 / NBRC 0083 / IGC 2968) (Yeast)).